Reading from the N-terminus, the 141-residue chain is Large ribosomal subunit protein uL13 (141 aa).

This sequence belongs to the universal ribosomal protein uL13 family. As to quaternary structure, part of the 50S ribosomal subunit.

This protein is one of the early assembly proteins of the 50S ribosomal subunit, although it is not seen to bind rRNA by itself. It is important during the early stages of 50S assembly. This chain is Large ribosomal subunit protein uL13, found in Sulfurovum sp. (strain NBC37-1).